The following is a 550-amino-acid chain: MAGALFEPSFAAAHPAGLLRRPVTRTVVLSVAATSIAHMFEISLPDPTELCRSDDGALVAAIEDCARVEAAASARRLSAIAELTGRRTGADQRADWACDFWDCAAAEVAAALTISHGKASGQMHLSLALNRLPQVAALFLAGHLGARLFSIIAWRTYLVRDPHALSLLDAALAEHAGAWGPLSAPKLEKAIDSWIDRYDPGALRRSRISARTRDLCIGDPDEDAGTAALWGRLYATDAAMLDRRLTEMAHGVCEDDPRTLAQRRADALGALAAGADHLACGCGKPDCPSGAGNDERAAGVVIHVVADASALDAQPDPHLSGDEPPSRPLTPETTLFEALTPDPEPDPPATHAPAELITTGGGVVPAPLLAELIRGGATISQVRHPGDLAAEPHYRPSAKLAEFVRMRDLTCRFPGCDVPAEFCDIDHSAPWPLGPTHPSNLKCACRKHHLLKTFWTGWRDVQLPDGTVIWTAPNGHTYTTHPGSRIFFPTWHTTTAELPQTSTAAVNVDARGLMMPRRRRTRAAELAHRINAERALNDAYMAERNKPPSF.

A signal peptide spans 1–13 (MAGALFEPSFAAA). The disordered stretch occupies residues 312-358 (DAQPDPHLSGDEPPSRPLTPETTLFEALTPDPEPDPPATHAPAELIT).

This sequence to M.tuberculosis Rv3776.

This is an uncharacterized protein from Mycobacterium tuberculosis (strain CDC 1551 / Oshkosh).